Consider the following 126-residue polypeptide: Acidic phospholipase A2 2 (126 aa).

The propeptide occupies 1–7 (SNRPMPL). 7 disulfide bridges follow: cysteine 18-cysteine 78, cysteine 33-cysteine 125, cysteine 35-cysteine 51, cysteine 50-cysteine 106, cysteine 57-cysteine 99, cysteine 67-cysteine 92, and cysteine 85-cysteine 97. Ca(2+) is bound by residues tyrosine 34, glycine 36, and glycine 38. Histidine 54 is a catalytic residue. Aspartate 55 contributes to the Ca(2+) binding site. Residue aspartate 100 is part of the active site.

It belongs to the phospholipase A2 family. Group I subfamily. D49 sub-subfamily. Heterodimer formed between two homologous isoforms: isoform 1 and isoform 2. Ca(2+) serves as cofactor. As to expression, expressed by the venom gland.

It localises to the secreted. It carries out the reaction a 1,2-diacyl-sn-glycero-3-phosphocholine + H2O = a 1-acyl-sn-glycero-3-phosphocholine + a fatty acid + H(+). PLA2 catalyzes the calcium-dependent hydrolysis of the 2-acyl groups in 3-sn-phosphoglycerides. The polypeptide is Acidic phospholipase A2 2 (Naja sagittifera (Andaman cobra)).